The following is a 468-amino-acid chain: UDP-N-acetylmuramate--L-alanine ligase (468 aa).

Residue 112–118 participates in ATP binding; that stretch reads GMHGKTT.

It belongs to the MurCDEF family.

It localises to the cytoplasm. It carries out the reaction UDP-N-acetyl-alpha-D-muramate + L-alanine + ATP = UDP-N-acetyl-alpha-D-muramoyl-L-alanine + ADP + phosphate + H(+). The protein operates within cell wall biogenesis; peptidoglycan biosynthesis. In terms of biological role, cell wall formation. The protein is UDP-N-acetylmuramate--L-alanine ligase of Koribacter versatilis (strain Ellin345).